Here is a 135-residue protein sequence, read N- to C-terminus: Ribonuclease P protein component (135 aa).

It belongs to the RnpA family. In terms of assembly, consists of a catalytic RNA component (M1 or rnpB) and a protein subunit.

It carries out the reaction Endonucleolytic cleavage of RNA, removing 5'-extranucleotides from tRNA precursor.. RNaseP catalyzes the removal of the 5'-leader sequence from pre-tRNA to produce the mature 5'-terminus. It can also cleave other RNA substrates such as 4.5S RNA. The protein component plays an auxiliary but essential role in vivo by binding to the 5'-leader sequence and broadening the substrate specificity of the ribozyme. This is Ribonuclease P protein component from Pseudomonas aeruginosa (strain LESB58).